We begin with the raw amino-acid sequence, 475 residues long: Methionine aminopeptidase 2-1 (475 aa).

Residues 1–12 (MGSKSPEGHRQT) show a composition bias toward basic and acidic residues. A disordered region spans residues 1-97 (MGSKSPEGHR…LKQSSPPRVL (97 aa)). A compositionally biased stretch (acidic residues) spans 44–57 (NLDDDNDDDGEANE). Residues 70–83 (KKKKRKRSKKKTKK) show a composition bias toward basic residues. Histidine 211 contacts substrate. Residues aspartate 232, aspartate 243, and histidine 312 each coordinate a divalent metal cation. Position 320 (histidine 320) interacts with substrate. A divalent metal cation-binding residues include glutamate 345 and glutamate 456.

It belongs to the peptidase M24A family. Methionine aminopeptidase eukaryotic type 2 subfamily. Co(2+) is required as a cofactor. It depends on Zn(2+) as a cofactor. The cofactor is Mn(2+). Requires Fe(2+) as cofactor.

It localises to the cytoplasm. It catalyses the reaction Release of N-terminal amino acids, preferentially methionine, from peptides and arylamides.. Its function is as follows. Cotranslationally removes the N-terminal methionine from nascent proteins. The N-terminal methionine is often cleaved when the second residue in the primary sequence is small and uncharged (Met-Ala-, Cys, Gly, Pro, Ser, Thr, or Val). This Aspergillus niger (strain ATCC MYA-4892 / CBS 513.88 / FGSC A1513) protein is Methionine aminopeptidase 2-1.